A 189-amino-acid polypeptide reads, in one-letter code: Small ribosomal subunit protein uS5 (189 aa).

One can recognise an S5 DRBM domain in the interval F22–V85.

The protein belongs to the universal ribosomal protein uS5 family. In terms of assembly, part of the 30S ribosomal subunit. Contacts proteins S4 and S8.

In terms of biological role, with S4 and S12 plays an important role in translational accuracy. Located at the back of the 30S subunit body where it stabilizes the conformation of the head with respect to the body. The protein is Small ribosomal subunit protein uS5 of Rhizobium etli (strain CIAT 652).